The chain runs to 455 residues: Glutamyl-tRNA reductase (455 aa).

Substrate contacts are provided by residues 49 to 52 (TCNR), serine 109, 114 to 116 (ETQ), and glutamine 120. Cysteine 50 functions as the Nucleophile in the catalytic mechanism. 189 to 194 (GAGKMG) is a binding site for NADP(+).

The protein belongs to the glutamyl-tRNA reductase family. As to quaternary structure, homodimer.

It catalyses the reaction (S)-4-amino-5-oxopentanoate + tRNA(Glu) + NADP(+) = L-glutamyl-tRNA(Glu) + NADPH + H(+). It functions in the pathway porphyrin-containing compound metabolism; protoporphyrin-IX biosynthesis; 5-aminolevulinate from L-glutamyl-tRNA(Glu): step 1/2. Its function is as follows. Catalyzes the NADPH-dependent reduction of glutamyl-tRNA(Glu) to glutamate 1-semialdehyde (GSA). The sequence is that of Glutamyl-tRNA reductase from Geobacillus thermodenitrificans (strain NG80-2).